We begin with the raw amino-acid sequence, 52 residues long: DNA import protein CedA2 (52 aa).

The next 2 membrane-spanning stretches (helical) occupy residues 1–21 (MKSY…VYIY) and 27–47 (ILVS…IIFE).

As to quaternary structure, forms a complex composed of CedA, CedA1 and CedA2.

Its subcellular location is the cell membrane. Its function is as follows. Part of the Ced system, which is involved in DNA import. This is DNA import protein CedA2 from Sulfolobus acidocaldarius (strain ATCC 33909 / DSM 639 / JCM 8929 / NBRC 15157 / NCIMB 11770).